We begin with the raw amino-acid sequence, 363 residues long: Aminomethyltransferase (363 aa).

Belongs to the GcvT family. As to quaternary structure, the glycine cleavage system is composed of four proteins: P, T, L and H.

The catalysed reaction is N(6)-[(R)-S(8)-aminomethyldihydrolipoyl]-L-lysyl-[protein] + (6S)-5,6,7,8-tetrahydrofolate = N(6)-[(R)-dihydrolipoyl]-L-lysyl-[protein] + (6R)-5,10-methylene-5,6,7,8-tetrahydrofolate + NH4(+). Its function is as follows. The glycine cleavage system catalyzes the degradation of glycine. This is Aminomethyltransferase from Prosthecochloris aestuarii (strain DSM 271 / SK 413).